The primary structure comprises 1029 residues: Translation initiation factor IF-2 (1029 aa).

The interval 73–441 (RELRSEEDDG…RQRRRERKRE (369 aa)) is disordered. Acidic residues-rich tracts occupy residues 106–121 (TAEE…DEEE) and 148–177 (AEAE…DEAE). The span at 183–196 (AADKDAAAIADEQK) shows a compositional bias: basic and acidic residues. 3 stretches are compositionally biased toward acidic residues: residues 213–234 (TGEE…DAEA), 242–258 (TEAE…AEDV), and 279–322 (APDE…DEEG). The span at 358-372 (KDKDKDKSSKKDKKD) shows a compositional bias: basic and acidic residues. Over residues 373–386 (KSNKKSKSKGKKQK) the composition is skewed to basic residues. A compositionally biased stretch (low complexity) spans 400–411 (QTLQETLQELEQ). The span at 417–427 (RQRRRRRRRKR) shows a compositional bias: basic residues. Basic and acidic residues predominate over residues 428-441 (HEEERQRRRERKRE). A tr-type G domain is found at 524-696 (PRAPVVTVMG…LLQSEIMELK (173 aa)). Positions 533-540 (GHVDHGKT) are G1. 533–540 (GHVDHGKT) serves as a coordination point for GTP. Positions 558–562 (GITQH) are G2. A G3 region spans residues 582–585 (DTPG). GTP-binding positions include 582–586 (DTPGH) and 636–639 (NKMD). The G4 stretch occupies residues 636–639 (NKMD). Residues 672–674 (SAK) are G5.

It belongs to the TRAFAC class translation factor GTPase superfamily. Classic translation factor GTPase family. IF-2 subfamily.

The protein resides in the cytoplasm. Its function is as follows. One of the essential components for the initiation of protein synthesis. Protects formylmethionyl-tRNA from spontaneous hydrolysis and promotes its binding to the 30S ribosomal subunits. Also involved in the hydrolysis of GTP during the formation of the 70S ribosomal complex. The chain is Translation initiation factor IF-2 from Salinibacter ruber (strain DSM 13855 / M31).